A 337-amino-acid polypeptide reads, in one-letter code: ATP-dependent (S)-NAD(P)H-hydrate dehydratase (337 aa).

Ser6 carries the post-translational modification Phosphoserine. Residues 11–335 enclose the YjeF C-terminal domain; it reads IKLAQKRCIP…DRVGEVFAKL (325 aa). (6S)-NADPHX-binding positions include Gly121 and 182–188; that span reads NVVEFKR. ATP contacts are provided by residues 218 to 222 and 240 to 249; these read KGQSD and GSNKRVGGQG. Positions 224–246 are disordered; it reads IFSPDSEKDMLTNSEEGSNKRVG. Asp250 serves as a coordination point for (6S)-NADPHX.

The protein belongs to the NnrD/CARKD family. Mg(2+) serves as cofactor.

It is found in the cytoplasm. The enzyme catalyses (6S)-NADHX + ATP = ADP + phosphate + NADH + H(+). The catalysed reaction is (6S)-NADPHX + ATP = ADP + phosphate + NADPH + H(+). In terms of biological role, catalyzes the dehydration of the S-form of NAD(P)HX at the expense of ATP, which is converted to ADP. Together with NAD(P)HX epimerase, which catalyzes the epimerization of the S- and R-forms, the enzyme allows the repair of both epimers of NAD(P)HX, a damaged form of NAD(P)H that is a result of enzymatic or heat-dependent hydration. This is ATP-dependent (S)-NAD(P)H-hydrate dehydratase from Saccharomyces cerevisiae (strain ATCC 204508 / S288c) (Baker's yeast).